Here is a 90-residue protein sequence, read N- to C-terminus: Cluster 41 protein AFLA_114800 (90 aa).

A helical transmembrane segment spans residues 55-77 (GLLLLCCFYPIGNLILLVRLSLV). N-linked (GlcNAc...) asparagine glycosylation occurs at Asn80.

Its subcellular location is the membrane. Its function is as follows. Cluster 41 protein; part of the gene cluster 41 that mediates the biosynthesis of an extracellular and diffusible metabolite that is able to stimulate colony sclerotial production. This Aspergillus flavus (strain ATCC 200026 / FGSC A1120 / IAM 13836 / NRRL 3357 / JCM 12722 / SRRC 167) protein is Cluster 41 protein AFLA_114800.